A 296-amino-acid chain; its full sequence is Glycine--tRNA ligase alpha subunit (296 aa).

It belongs to the class-II aminoacyl-tRNA synthetase family. Tetramer of two alpha and two beta subunits.

The protein localises to the cytoplasm. It catalyses the reaction tRNA(Gly) + glycine + ATP = glycyl-tRNA(Gly) + AMP + diphosphate. The protein is Glycine--tRNA ligase alpha subunit of Listeria monocytogenes serotype 4a (strain HCC23).